Consider the following 379-residue polypeptide: 8-amino-7-oxononanoate synthase (379 aa).

Substrate-binding residues include R27 and R34. Residue 114–115 (GY) coordinates pyridoxal 5'-phosphate. A substrate-binding site is contributed by H139. Pyridoxal 5'-phosphate contacts are provided by residues S187, 212 to 215 (DDAH), and 232 to 235 (TLSK). K235 bears the N6-(pyridoxal phosphate)lysine mark. T344 serves as a coordination point for substrate.

It belongs to the class-II pyridoxal-phosphate-dependent aminotransferase family. BioF subfamily. As to quaternary structure, homodimer. Requires pyridoxal 5'-phosphate as cofactor.

It catalyses the reaction 6-carboxyhexanoyl-[ACP] + L-alanine + H(+) = (8S)-8-amino-7-oxononanoate + holo-[ACP] + CO2. The protein operates within cofactor biosynthesis; biotin biosynthesis. Catalyzes the decarboxylative condensation of pimeloyl-[acyl-carrier protein] and L-alanine to produce 8-amino-7-oxononanoate (AON), [acyl-carrier protein], and carbon dioxide. This is 8-amino-7-oxononanoate synthase from Methylobacterium nodulans (strain LMG 21967 / CNCM I-2342 / ORS 2060).